We begin with the raw amino-acid sequence, 174 residues long: uncharacterized protein (174 aa).

The tract at residues 153-174 (RSGNHSAGNVHPASPMIKVQGG) is disordered.

This is an uncharacterized protein from Sinorhizobium fredii (strain NBRC 101917 / NGR234).